Here is a 441-residue protein sequence, read N- to C-terminus: Heat shock factor protein 4 (441 aa).

The DNA-binding element occupies 17 to 121 (NVPAFLTKLW…EHLLEHIKRK (105 aa)). The tract at residues 130 to 205 (TKVRQEDLSK…QMQSNSPSTV (76 aa)) is hydrophobic repeat HR-A/B.

The protein belongs to the HSF family. In terms of tissue distribution, predominantly expressed in the eye.

The protein resides in the nucleus. In terms of biological role, heat-shock transcription factor that specifically binds heat shock promoter elements (HSE). Required for denucleation and organelle rupture and degradation that occur during eye lens terminal differentiation, when fiber cells that compose the lens degrade all membrane-bound organelles in order to provide lens with transparency to allow the passage of light. In this process, may regulate denucleation of lens fiber cells in part by activating dnase1l1l and dnase2b transcription. May be involved in DNA repair through the transcriptional regulation of rad51. May up-regulate TP53 protein in lens fiber cells, possibly through protein stabilization. In the eye lens, controls the expression of alpha-crystallin B chain/CRYAB and consequently may be involved in the regulation of lysosomal acidification. This Danio rerio (Zebrafish) protein is Heat shock factor protein 4.